Consider the following 270-residue polypeptide: Orotidine 5'-phosphate decarboxylase (270 aa).

Substrate is bound by residues Asp-39, 61-63 (KTH), 93-102 (DRKFADIGNT), Tyr-221, and Arg-239. The Proton donor role is filled by Lys-95.

Belongs to the OMP decarboxylase family.

The enzyme catalyses orotidine 5'-phosphate + H(+) = UMP + CO2. It participates in pyrimidine metabolism; UMP biosynthesis via de novo pathway; UMP from orotate: step 2/2. This chain is Orotidine 5'-phosphate decarboxylase (URA3), found in Candida dubliniensis (strain CD36 / ATCC MYA-646 / CBS 7987 / NCPF 3949 / NRRL Y-17841) (Yeast).